A 277-amino-acid polypeptide reads, in one-letter code: Large ribosomal subunit protein uL2 (277 aa).

2 disordered regions span residues 36–58 (PLHK…GGGH) and 219–277 (TVRG…RKNK). Positions 258-277 (KTRKKKNKSDKFIVRRRKNK) are enriched in basic residues.

Belongs to the universal ribosomal protein uL2 family. As to quaternary structure, part of the 50S ribosomal subunit. Forms a bridge to the 30S subunit in the 70S ribosome.

Functionally, one of the primary rRNA binding proteins. Required for association of the 30S and 50S subunits to form the 70S ribosome, for tRNA binding and peptide bond formation. It has been suggested to have peptidyltransferase activity; this is somewhat controversial. Makes several contacts with the 16S rRNA in the 70S ribosome. The protein is Large ribosomal subunit protein uL2 of Bacillus velezensis (strain DSM 23117 / BGSC 10A6 / LMG 26770 / FZB42) (Bacillus amyloliquefaciens subsp. plantarum).